The sequence spans 1785 residues: Mellein synthase (1785 aa).

The segment at 1–36 (MATPDDPATPALSLSASNSSSPTAASSVPPPTGTSE) is disordered. Positions 8–27 (ATPALSLSASNSSSPTAASS) are enriched in low complexity. The region spanning 39 to 464 (YDDVAIIGMS…GTVSHAIIEQ (426 aa)) is the Ketosynthase family 3 (KS3) domain. Residues C211, H346, and H386 each act as for beta-ketoacyl synthase activity in the active site. The malonyl-CoA:ACP transacylase (MAT) domain stretch occupies residues 575 to 888 (VWVFSGHGSH…AVAQLWTKGV (314 aa)). The active-site For malonyltransferase activity is S661. Positions 933–1047 (NNMLGQRMVV…ASWENEPSAN (115 aa)) are N-terminal hotdog fold. Positions 933-1206 (NNMLGQRMVV…FTEVEATPTK (274 aa)) constitute a PKS/mFAS DH domain. The tract at residues 935-1203 (MLGQRMVVAG…SIRFTEVEAT (269 aa)) is dehydratase (DH) domain. H965 acts as the Proton acceptor; for dehydratase activity in catalysis. The tract at residues 1062–1206 (GTRVSETFSV…FTEVEATPTK (145 aa)) is C-terminal hotdog fold. The active-site Proton donor; for dehydratase activity is D1123. Positions 1418 to 1608 (GTYVLTGGLG…AIAFQWTAWR (191 aa)) are ketoreductase (KR) domain. Residues 1681-1698 (QDQSAPASGNASDSSGRP) show a composition bias toward polar residues. The tract at residues 1681-1701 (QDQSAPASGNASDSSGRPTAS) is disordered. One can recognise a Carrier domain in the interval 1706–1781 (PWLDVKIREC…AMVGWFQKQF (76 aa)). An O-(pantetheine 4'-phosphoryl)serine modification is found at S1741.

It participates in secondary metabolite biosynthesis. Functionally, polyketide synthase that produces (R)-mellein, a secondary metabolite that inhibits the germination of wheat (Triticum aestivum) and barrel medic (Medicago truncatula) seeds. Condensates 1 acetate starter unit and 4 extender malonate units. The nascent pentaketide intermediate then undergoes an aldol cyclization and is aromatized via dehydration. The (R)-O-methylmellein isolated from P.nodorum is most likely to be derived from (R)-mellein via an additional methylation at the hydroxyl group. Interestingly, no O-methyltransferase gene is encoded in the vicinity of MLNS on the chromosome. Thus, the O-methylation is likely to be catalyzed by an endogenous O-methyltransferase encoded elsewhere in the genome of P.nodorum. This is Mellein synthase from Phaeosphaeria nodorum (strain SN15 / ATCC MYA-4574 / FGSC 10173) (Glume blotch fungus).